We begin with the raw amino-acid sequence, 214 residues long: Large ribosomal subunit protein uL16-like (214 aa).

The protein belongs to the universal ribosomal protein uL16 family. In terms of assembly, component of the 60S large ribosomal subunit (LSU).

It is found in the cytoplasm. Testis-specific component of the ribosome, which is required for the transition from prophase to metaphase in male meiosis I. Compensates for the inactivated X-linked RPL10 paralog during spermatogenesis. The ribosome is a large ribonucleoprotein complex responsible for the synthesis of proteins in the cell. The small ribosomal subunit (SSU) binds messenger RNAs (mRNAs) and translates the encoded message by selecting cognate aminoacyl-transfer RNA (tRNA) molecules. The large subunit (LSU) contains the ribosomal catalytic site termed the peptidyl transferase center (PTC), which catalyzes the formation of peptide bonds, thereby polymerizing the amino acids delivered by tRNAs into a polypeptide chain. The nascent polypeptides leave the ribosome through a tunnel in the LSU and interact with protein factors that function in enzymatic processing, targeting, and the membrane insertion of nascent chains at the exit of the ribosomal tunnel. The sequence is that of Large ribosomal subunit protein uL16-like (RPL10L) from Bos taurus (Bovine).